The following is a 709-amino-acid chain: Homeobox-leucine zipper protein TF1 (709 aa).

Positions 66-125 (RKRRLQRLTGKQSEVLEGFFSICGHPDDGQKRHLSETTGLGLDQVKFWFQNKRTQVKTMC) form a DNA-binding region, homeobox. A coiled-coil region spans residues 166–187 (NQLAVEMERLMGQSEWLQQEIA). One can recognise an START domain in the interval 212 to 441 (GQHDQQMIAE…MARQSARMRD (230 aa)).

Belongs to the HD-ZIP homeobox family. Class IV subfamily.

The protein localises to the nucleus. Its function is as follows. Probable transcription factor. This is Homeobox-leucine zipper protein TF1 (TF1) from Oryza sativa subsp. japonica (Rice).